Consider the following 385-residue polypeptide: Guanine nucleotide-binding protein alpha-5 subunit (385 aa).

Residue Gly-2 is the site of N-myristoyl glycine attachment. Cys-6 carries the S-palmitoyl cysteine lipid modification. In terms of domain architecture, G-alpha spans 32-385; it reads RKIKMLLLGI…NKNIETLSLE (354 aa). The tract at residues 35–48 is G1 motif; it reads KMLLLGISDSGKST. GTP contacts are provided by residues 40–47, 174–180, 199–203, 298–301, and Ala-357; these read GISDSGKS, IHMRQTT, DVGGQ, and NKID. Positions 47 and 180 each coordinate Mg(2+). A G2 motif region spans residues 172–180; the sequence is DLIHMRQTT. Residues 195–204 form a G3 motif region; it reads IRLIDVGGQK. The interval 294–301 is G4 motif; the sequence is MLFLNKID. Positions 355–360 are G5 motif; the sequence is TQATIT.

Belongs to the G-alpha family. As to quaternary structure, g proteins are composed of 3 units; alpha, beta and gamma. The alpha chain contains the guanine nucleotide binding site.

Functionally, guanine nucleotide-binding proteins (G proteins) are involved as modulators or transducers in various transmembrane signaling systems. The polypeptide is Guanine nucleotide-binding protein alpha-5 subunit (gpa-5) (Caenorhabditis briggsae).